The following is an 888-amino-acid chain: E3 ubiquitin-protein ligase SH3RF1 (888 aa).

The RING-type zinc-finger motif lies at 12 to 53 (CPVCLERLDASAKVLPCQHTFCKRCLLGIVGSRNELRCPECR). Over residues 108–127 (SSKDLQSSQGGQQPRVQSWS) the composition is skewed to polar residues. Residues 108–128 (SSKDLQSSQGGQQPRVQSWSP) are disordered. SH3 domains lie at 134 to 193 (PQLP…IIKP) and 196 to 259 (QPPP…FNSA). Residues 275-321 (DAGECSSAAAQSSTAPKHSDTKKNTKKRHSFTSLTMANKSSQASQNR) are disordered. The interval 292-362 (HSDTKKNTKK…APSQVHISTT (71 aa)) is interaction with RAC1. Phosphoserine is present on S304. The span at 305-321 (FTSLTMANKSSQASQNR) shows a compositional bias: polar residues. The interval 440-543 (HLRPQTRPSV…STAGGPAQKL (104 aa)) is interaction with AKT2. Residues 445–506 (TRPSVYVAIY…PGNYVAPVTR (62 aa)) form the SH3 3 domain. Disordered regions lie at residues 516–548 (VPMS…GNGV), 620–639 (SVGL…LMPG), and 684–741 (TVLP…ASPT). Positions 520–535 (TAGQTSRGVTMVSPST) are enriched in polar residues. S532 is subject to Phosphoserine. A compositionally biased stretch (polar residues) spans 692–704 (SPDSASSACGNSS). Residues 707–718 (KPDKDSKKEKKG) are compositionally biased toward basic and acidic residues. A Phosphoserine modification is found at S735. In terms of domain architecture, SH3 4 spans 829–888 (VVCERHRVVVSYPPQSEAELELKEGDIVFVHKKREDGWFKGTLQRNGKTGLFPGSFVENI).

Belongs to the SH3RF family. Interacts with RAC1; in a GTP-dependent manner. Interacts with MAP3K10/MLK2 and MAP3K11/MLK3. Interacts with MAPK8IP; this interaction leads to the PJAC complex (POSH-JIP or SH3RF1/MAPK8IP apoptotic complex) with a 1:1 ratio. Interacts with SIAH1. Interacts with HERP1. Probably part of a signaling complex that may contain SH3RF1, MAPK8IP, DLK1, MAP2K4/MKK4, MAP2K7/MKK7, MAPK8/JNK1, MAPK9/JNK2, AKT1 and AKT2. Found in a complex with RAC2, MAP3K7/TAK1, MAP2K7/MKK7, MAPK8IP1/JIP1, MAPK8/JNK1 and MAPK9/JNK2. Found in a complex with RAC1, MAP3K11/MLK3, MAP2K7/MKK7, MAPK8IP1/JIP1 and MAPK8/JNK1. Interacts with SH3RF2. Post-translationally, phosphorylated at Ser-304 by AKT1 and AKT2. When phosphorylated, it has reduced ability to bind Rac. Autoubiquitinated. Ubiquitinated by SH3RF2, leading to proteasome-mediated degradation.

Its subcellular location is the cytoplasm. The protein resides in the perinuclear region. It is found in the cell projection. It localises to the lamellipodium. The protein localises to the golgi apparatus. Its subcellular location is the trans-Golgi network. The catalysed reaction is S-ubiquitinyl-[E2 ubiquitin-conjugating enzyme]-L-cysteine + [acceptor protein]-L-lysine = [E2 ubiquitin-conjugating enzyme]-L-cysteine + N(6)-ubiquitinyl-[acceptor protein]-L-lysine.. It functions in the pathway protein modification; protein ubiquitination. Functionally, has E3 ubiquitin-protein ligase activity. In the absence of an external substrate, it can catalyze self-ubiquitination. Stimulates ubiquitination of potassium channel KCNJ1, enhancing it's dynamin-dependent and clathrin-independent endocytosis. Acts as a scaffold protein that coordinates with MAPK8IP1/JIP1 in organizing different components of the JNK pathway, including RAC1 or RAC2, MAP3K11/MLK3 or MAP3K7/TAK1, MAP2K7/MKK7, MAPK8/JNK1 and/or MAPK9/JNK2 into a functional multiprotein complex to ensure the effective activation of the JNK signaling pathway. Regulates the differentiation of CD4(+) and CD8(+) T-cells and promotes T-helper 1 (Th1) cell differentiation. Regulates the activation of MAPK8/JNK1 and MAPK9/JNK2 in CD4(+) T-cells and the activation of MAPK8/JNK1 in CD8(+) T-cells. Plays a crucial role in the migration of neocortical neurons in the developing brain. Controls proper cortical neuronal migration and the formation of proximal cytoplasmic dilation in the leading process (PCDLP) in migratory neocortical neurons by regulating the proper localization of activated RAC1 and F-actin assembly. (Microbial infection) Plays an essential role in the targeting of HIV-1 Gag to the plasma membrane, this function is dependent on it's RING domain, and hence it's E3 ligase activity. This chain is E3 ubiquitin-protein ligase SH3RF1 (SH3RF1), found in Homo sapiens (Human).